The primary structure comprises 82 residues: Putative membrane protein insertion efficiency factor (82 aa).

The tract at residues 63 to 82 is disordered; the sequence is GGFDPVPLKKDKNSKTTHHH.

This sequence belongs to the UPF0161 family.

It localises to the cell membrane. Its function is as follows. Could be involved in insertion of integral membrane proteins into the membrane. This chain is Putative membrane protein insertion efficiency factor, found in Staphylococcus epidermidis (strain ATCC 35984 / DSM 28319 / BCRC 17069 / CCUG 31568 / BM 3577 / RP62A).